Reading from the N-terminus, the 403-residue chain is Phosphoglycerate kinase (403 aa).

Substrate is bound by residues 22–24 (DLN), Arg37, 60–63 (HLGN), Arg119, and Arg152. ATP is bound by residues Lys202, Glu325, and 355 to 358 (GGDT).

The protein belongs to the phosphoglycerate kinase family. Monomer.

The protein resides in the cytoplasm. It carries out the reaction (2R)-3-phosphoglycerate + ATP = (2R)-3-phospho-glyceroyl phosphate + ADP. It functions in the pathway carbohydrate degradation; glycolysis; pyruvate from D-glyceraldehyde 3-phosphate: step 2/5. The chain is Phosphoglycerate kinase from Orientia tsutsugamushi (strain Boryong) (Rickettsia tsutsugamushi).